The primary structure comprises 353 residues: UPF0283 membrane protein YcjF (353 aa).

Over residues 1–19 the composition is skewed to basic and acidic residues; sequence MSEPLKPRIDFAEPLKEEP. The interval 1–48 is disordered; the sequence is MSEPLKPRIDFAEPLKEEPTSAFKAQQTFSEAESHTFAPAAIDERPED. The Periplasmic portion of the chain corresponds to 1–69; that stretch reads MSEPLKPRID…LRPKRSLWRK (69 aa). A helical membrane pass occupies residues 70 to 90; it reads MVMGGLALFGASVVGQGVQWT. Topologically, residues 91–99 are cytoplasmic; it reads MNAWQTQDW. Residues 100–120 form a helical membrane-spanning segment; that stretch reads VALGGCAAGALIVGAGVGSVV. At 121–212 the chain is on the periplasmic side; that stretch reads TEWWRLWRLR…ARREISRFAA (92 aa). Residues 213–233 traverse the membrane as a helical segment; sequence ESTLMIAVSPLALVDMAFIAW. Residues 234 to 353 are Cytoplasmic-facing; the sequence is RNLRLINRIA…LQKSKSSPEK (120 aa).

The protein belongs to the UPF0283 family.

The protein resides in the cell inner membrane. The protein is UPF0283 membrane protein YcjF (ycjF) of Salmonella typhi.